Reading from the N-terminus, the 230-residue chain is 7-cyano-7-deazaguanine synthase (230 aa).

8–18 (LSGGMDSAVVT) contributes to the ATP binding site. Zn(2+)-binding residues include Cys-186, Cys-196, Cys-199, and Cys-202.

The protein belongs to the QueC family. The cofactor is Zn(2+).

It catalyses the reaction 7-carboxy-7-deazaguanine + NH4(+) + ATP = 7-cyano-7-deazaguanine + ADP + phosphate + H2O + H(+). It participates in purine metabolism; 7-cyano-7-deazaguanine biosynthesis. In terms of biological role, catalyzes the ATP-dependent conversion of 7-carboxy-7-deazaguanine (CDG) to 7-cyano-7-deazaguanine (preQ(0)). The chain is 7-cyano-7-deazaguanine synthase from Xylella fastidiosa (strain 9a5c).